The following is a 168-amino-acid chain: Gastrula zinc finger protein XlCGF42.1 (168 aa).

6 C2H2-type zinc fingers span residues 6 to 28 (YSCS…RKSH), 34 to 56 (FCCS…YRTH), 62 to 84 (CICS…QKYH), 90 to 112 (FSCS…LRIH), 118 to 140 (YTCT…LRIH), and 146 to 165 (FTCS…DRHH).

It belongs to the krueppel C2H2-type zinc-finger protein family.

It is found in the nucleus. May be involved in transcriptional regulation. The sequence is that of Gastrula zinc finger protein XlCGF42.1 from Xenopus laevis (African clawed frog).